Reading from the N-terminus, the 175-residue chain is Protein FAM89A (175 aa).

Positions 141–175 (FQEQGSLQDGQHHGSPRDQSPLTHLSSSDWILESI) are disordered. Residues 157-169 (RDQSPLTHLSSSD) are compositionally biased toward polar residues.

It belongs to the FAM89 family.

The polypeptide is Protein FAM89A (Fam89a) (Mus musculus (Mouse)).